The sequence spans 1088 residues: Methionine S-methyltransferase (1088 aa).

The protein belongs to the class I-like SAM-binding methyltransferase superfamily. As to quaternary structure, homotetramer.

Its subcellular location is the cytoplasm. It carries out the reaction L-methionine + S-adenosyl-L-methionine = S-methyl-L-methionine + S-adenosyl-L-homocysteine. Catalyzes the S-methylmethionine (SMM) biosynthesis from adenosyl-L-homocysteine (AdoMet) and methionine. SMM biosynthesis (by MMT1) and degradation (by HMT-1, HMT-2 and HMT-3) constitute the SMM cycle in plants, which is probably required to achieve short term control of AdoMet level. Also able to catalyze the selenium-methylmethionine (SeMM) from AdoMet and selenium-methionine (SeMet). May play a role in phoem sulfur transport; such function is however not essential. In Wollastonia biflora (Beach sunflower), this protein is Methionine S-methyltransferase (MMT1).